The primary structure comprises 457 residues: uncharacterized protein (457 aa).

Positions 1 to 18 (MKLLISLLWSIFFSIVYS) are cleaved as a signal peptide. Residues 19-173 (EKTLLNFKHY…GGLPASQFPR (155 aa)) are Lumenal-facing. Residues 174 to 194 (MPISGGITIAYSVILALWMFF) traverse the membrane as a helical segment. Topologically, residues 195–207 (RFQYKHSIVTVQK) are cytoplasmic. Residues 208–228 (AIMFLLIFSCAQQAVTSIVLD) form a helical membrane-spanning segment. Residues 229–243 (TENLRNRGNFTWLGE) lie on the Lumenal side of the membrane. Residues 244–264 (TLVSILFACQLVLDLALLLIL) form a helical membrane-spanning segment. The Cytoplasmic portion of the chain corresponds to 265–284 (SWGYTRYSTNMRDRLFTEAK). Residues 285–305 (IPLIICFFALFVVRFFAITIQ) form a helical membrane-spanning segment. Residues 306 to 314 (SIHLGLWFC) lie on the Lumenal side of the membrane. Residues 315–335 (FFFLTACISALYILFGAFVAL) form a helical membrane-spanning segment. Topologically, residues 336 to 358 (PSTLRALVEQRYYTLHSIYKIFR) are cytoplasmic. A helical membrane pass occupies residues 359 to 379 (IMVLCGVVTIFSFSLVALIFC). Topologically, residues 380 to 457 (SNTNNNSTNK…EEDIRADKSK (78 aa)) are lumenal.

Belongs to the LU7TM family.

It is found in the endoplasmic reticulum membrane. This is an uncharacterized protein from Schizosaccharomyces pombe (strain 972 / ATCC 24843) (Fission yeast).